A 200-amino-acid chain; its full sequence is Trem-like transcript 4 protein (200 aa).

The N-terminal stretch at Met-1 to Pro-25 is a signal peptide. The region spanning Glu-26–Ser-126 is the Ig-like V-type domain. Residues Cys-40 and Cys-109 are joined by a disulfide bond. Asn-93 is a glycosylation site (N-linked (GlcNAc...) asparagine).

It is found in the secreted. Its function is as follows. Positively regulates Toll-like receptor TLR7 signaling in macrophages. This chain is Trem-like transcript 4 protein (TREML4), found in Homo sapiens (Human).